The following is a 663-amino-acid chain: MVMSWLIITEKDNTARRIASILFKDVKTLKKGRVSYYHSPSNDAYVVGLKGHIVELDFPKELNNWTKTPLEKLLQAELVKKVKERTISSILKEIAKKADRVTVATDYDREGELIGVEALEIVKSVNPTVKVDRVRYSAVTEKEIRSAFSKPVKVDFNLANAALARQKIDLIWGATLTRLISVHSGRMGKDFLSVGRVQTPTLRLIVDRELEIQNFKPEKYYEIFAEFEGFIAKHPKRYGSKEEAEKLFAKIGETAKVEEFTRRRMEENRPTPFNTTEFLREASKFMSPHKAMNIAETLYMNGYISYPRTDNTVYPPTINLIEIVSALSSVFPREAQIVLSQDKITPSRGRRETKDHPPIYPTGVAKRGELSKDEWTIYELVVRRFLATLAPKAVWDVRRVVLDSNGVKFVANGRQLVEAGWRDIYIYSKAEETELPLLKKGDVLRILKKRLEEKETKPPGRYSASSLIKMMEKLNLGTKSTRHEIIQKLVSRRYIHGNPFRPSETAFSVINVLKETAETITLPDMTAKLENEMDLIAEGKKREPEVVDESREMLLQILRAIDYRKLSKDLREGVKKDKIVGKCPECGGELVVRQSKAGKRFIGCSNYPDCTFTLPLPQNGTLYITAKQCKEHEIKEVKIRTKKGYWNLGCPYCNYLNWKKENS.

In terms of domain architecture, Toprim spans 4–137 (SWLIITEKDN…TVKVDRVRYS (134 aa)). Residues Glu10 and Asp106 each contribute to the Mg(2+) site. The region spanning 155–558 (DFNLANAALA…ESREMLLQIL (404 aa)) is the Topo IA-type catalytic domain. The tract at residues 193–198 (SVGRVQ) is interaction with DNA. Catalysis depends on Tyr306, which acts as the O-(5'-phospho-DNA)-tyrosine intermediate. Residues 583 to 610 (CPECGGELVVRQSKAGKRFIGCSNYPDC) form a C4-type 1 zinc finger. Residues 629–653 (CKEHEIKEVKIRTKKGYWNLGCPYC) form a C4-type 2; atypical zinc finger.

This sequence belongs to the type IA topoisomerase family. In terms of assembly, monomer. The cofactor is Mg(2+).

It carries out the reaction ATP-independent breakage of single-stranded DNA, followed by passage and rejoining.. Releases the supercoiling and torsional tension of DNA, which is introduced during the DNA replication and transcription, by transiently cleaving and rejoining one strand of the DNA duplex. Introduces a single-strand break via transesterification at a target site in duplex DNA. The scissile phosphodiester is attacked by the catalytic tyrosine of the enzyme, resulting in the formation of a DNA-(5'-phosphotyrosyl)-enzyme intermediate and the expulsion of a 3'-OH DNA strand. The free DNA strand then undergoes passage around the unbroken strand, thus removing DNA supercoils. Finally, in the religation step, the DNA 3'-OH attacks the covalent intermediate to expel the active-site tyrosine and restore the DNA phosphodiester backbone. The polypeptide is DNA topoisomerase 1 (Archaeoglobus fulgidus (strain ATCC 49558 / DSM 4304 / JCM 9628 / NBRC 100126 / VC-16)).